The sequence spans 206 residues: Ribosomal RNA large subunit methyltransferase E (206 aa).

The S-adenosyl-L-methionine site is built by glycine 60, tryptophan 62, aspartate 80, aspartate 96, and aspartate 121. The Proton acceptor role is filled by lysine 161.

The protein belongs to the class I-like SAM-binding methyltransferase superfamily. RNA methyltransferase RlmE family.

The protein localises to the cytoplasm. The enzyme catalyses uridine(2552) in 23S rRNA + S-adenosyl-L-methionine = 2'-O-methyluridine(2552) in 23S rRNA + S-adenosyl-L-homocysteine + H(+). Its function is as follows. Specifically methylates the uridine in position 2552 of 23S rRNA at the 2'-O position of the ribose in the fully assembled 50S ribosomal subunit. The chain is Ribosomal RNA large subunit methyltransferase E from Hydrogenovibrio crunogenus (strain DSM 25203 / XCL-2) (Thiomicrospira crunogena).